The following is a 107-amino-acid chain: Ferredoxin 1 (107 aa).

2 4Fe-4S ferredoxin-type domains span residues 2–30 (TFVV…YEGP) and 31–60 (NFLV…SEDE). Positions 9 and 17 each coordinate [3Fe-4S] cluster. [4Fe-4S] cluster is bound by residues C21, C40, C43, and C46. C50 contacts [3Fe-4S] cluster.

[4Fe-4S] cluster is required as a cofactor. It depends on [3Fe-4S] cluster as a cofactor.

In terms of biological role, ferredoxins are iron-sulfur proteins that transfer electrons in a wide variety of metabolic reactions. The protein is Ferredoxin 1 of Stutzerimonas stutzeri (Pseudomonas stutzeri).